Here is a 419-residue protein sequence, read N- to C-terminus: Synaptotagmin-1 (419 aa).

Residues 1–57 (MVSESHHEALAAPPVTTVATVLPSNATEPASPGEGKEDAFSKLKEKFMNELHKIPLP) are Vesicular-facing. N-linked (GlcNAc...) asparagine glycosylation is present at Asn25. The chain crosses the membrane as a helical span at residues 58–80 (PWALIAIAIVAVLLVLTCCFCIC). 5 S-palmitoyl cysteine lipidation sites follow: Cys75, Cys76, Cys78, Cys80, and Cys83. The Cytoplasmic portion of the chain corresponds to 81–419 (KKCLFKKKNK…EVDAMLAVKK (339 aa)). The tract at residues 108–139 (KDLGKTMKDQDDDAETGLTDGEEKEEPKEEEK) is disordered. The segment covering 117 to 131 (QDDDAETGLTDGEEK) has biased composition (acidic residues). At Thr126 the chain carries Phosphothreonine. Positions 133 to 379 (EPKEEEKLGK…AIGKVFVGYN (247 aa)) are phospholipid binding. Positions 139–258 (KLGKLQYSLD…DFGHVTEEWR (120 aa)) constitute a C2 1 domain. 3 residues coordinate Ca(2+): Leu169, Asp170, and Asp176. Tyr227 carries the post-translational modification Phosphotyrosine. Residues Asp228, Phe229, Asp230, Ser233, Lys234, and Asp236 each contribute to the Ca(2+) site. The residue at position 262 (Ser262) is a Phosphoserine. Residues 270 to 403 (KLGDICFSLR…NPRRPIAQWH (134 aa)) enclose the C2 2 domain. Residues Asp301 and Asp307 each coordinate Ca(2+). Phosphoserine occurs at positions 340 and 342. Ca(2+) contacts are provided by Asp361, Asp363, and Asp369.

It belongs to the synaptotagmin family. In terms of assembly, homotetramer. Heterodimer; heterodimerizes with SYT2 in presence of calcium. Interacts with SCAMP5. Interacts with STON2. Forms a complex with SV2B, syntaxin 1 and SNAP25. Interacts with SV2A, SV2B and SV2C. Interacts with RIMS1. Interacts with PRRT2. Interacts with DNAJC5 in a phosphorylation-dependent manner. Interacts (via N-terminus) with RAB3A. Interacts with SYT12. Interacts with calmodulin. Interacts with DNM1 (via C-terminal proline-rich domain (PRD)); this interaction facilitates vesicle fission during clathrin-mediated endocytosis (CME). Requires Ca(2+) as cofactor. Glycosylated.

Its subcellular location is the cytoplasmic vesicle. The protein localises to the secretory vesicle membrane. It localises to the secretory vesicle. It is found in the synaptic vesicle membrane. The protein resides in the chromaffin granule membrane. Its subcellular location is the cytoplasm. Calcium sensor that participates in triggering neurotransmitter release at the synapse. May have a regulatory role in the membrane interactions during trafficking of synaptic vesicles at the active zone of the synapse. It binds acidic phospholipids with a specificity that requires the presence of both an acidic head group and a diacyl backbone. A Ca(2+)-dependent interaction between synaptotagmin and putative receptors for activated protein kinase C has also been reported. It can bind to at least three additional proteins in a Ca(2+)-independent manner; these are neurexins, syntaxin and AP2. Plays a role in dendrite formation by melanocytes. The sequence is that of Synaptotagmin-1 from Macaca fascicularis (Crab-eating macaque).